A 194-amino-acid polypeptide reads, in one-letter code: Surfactant protein C (194 aa).

Residues 1–21 (MDMGSKEVLMESPPDYSTGPR) are disordered. Positions 1 to 23 (MDMGSKEVLMESPPDYSTGPRSQ) are excised as a propeptide. 2 S-palmitoyl cysteine lipidation sites follow: cysteine 28 and cysteine 29. A propeptide spanning residues 59-194 (HMSQKHTEMV…LCGELPLYYI (136 aa)) is cleaved from the precursor. The BRICHOS domain maps to 95–194 (FSIGSTGIVL…LCGELPLYYI (100 aa)). A disulfide bridge links cysteine 122 with cysteine 186. The segment at 149-170 (SSTPTSKLGQEEGHSAGSDSDS) is disordered.

It is found in the secreted. The protein localises to the extracellular space. It localises to the surface film. In terms of biological role, pulmonary surfactant associated proteins promote alveolar stability by lowering the surface tension at the air-liquid interface in the peripheral air spaces. The protein is Surfactant protein C of Rattus norvegicus (Rat).